A 257-amino-acid polypeptide reads, in one-letter code: Imidazole glycerol phosphate synthase subunit HisF (257 aa).

Catalysis depends on residues D11 and D130.

It belongs to the HisA/HisF family. Heterodimer of HisH and HisF.

Its subcellular location is the cytoplasm. The enzyme catalyses 5-[(5-phospho-1-deoxy-D-ribulos-1-ylimino)methylamino]-1-(5-phospho-beta-D-ribosyl)imidazole-4-carboxamide + L-glutamine = D-erythro-1-(imidazol-4-yl)glycerol 3-phosphate + 5-amino-1-(5-phospho-beta-D-ribosyl)imidazole-4-carboxamide + L-glutamate + H(+). It functions in the pathway amino-acid biosynthesis; L-histidine biosynthesis; L-histidine from 5-phospho-alpha-D-ribose 1-diphosphate: step 5/9. Functionally, IGPS catalyzes the conversion of PRFAR and glutamine to IGP, AICAR and glutamate. The HisF subunit catalyzes the cyclization activity that produces IGP and AICAR from PRFAR using the ammonia provided by the HisH subunit. In Shewanella sp. (strain MR-4), this protein is Imidazole glycerol phosphate synthase subunit HisF.